The sequence spans 740 residues: Phosphoribosylformylglycinamidine synthase subunit PurL (740 aa).

Residue histidine 50 is part of the active site. The ATP site is built by tyrosine 53 and lysine 92. Glutamate 94 is a binding site for Mg(2+). Substrate is bound by residues 95 to 98 (SHNH) and arginine 117. Histidine 96 (proton acceptor) is an active-site residue. Position 118 (aspartate 118) interacts with Mg(2+). Residue glutamine 241 participates in substrate binding. Aspartate 269 provides a ligand contact to Mg(2+). Residue 313-315 (ESQ) participates in substrate binding. Residues aspartate 495 and glycine 532 each coordinate ATP. Residue asparagine 533 coordinates Mg(2+). Serine 535 contacts substrate.

The protein belongs to the FGAMS family. Monomer. Part of the FGAM synthase complex composed of 1 PurL, 1 PurQ and 2 PurS subunits.

It localises to the cytoplasm. It carries out the reaction N(2)-formyl-N(1)-(5-phospho-beta-D-ribosyl)glycinamide + L-glutamine + ATP + H2O = 2-formamido-N(1)-(5-O-phospho-beta-D-ribosyl)acetamidine + L-glutamate + ADP + phosphate + H(+). The protein operates within purine metabolism; IMP biosynthesis via de novo pathway; 5-amino-1-(5-phospho-D-ribosyl)imidazole from N(2)-formyl-N(1)-(5-phospho-D-ribosyl)glycinamide: step 1/2. Functionally, part of the phosphoribosylformylglycinamidine synthase complex involved in the purines biosynthetic pathway. Catalyzes the ATP-dependent conversion of formylglycinamide ribonucleotide (FGAR) and glutamine to yield formylglycinamidine ribonucleotide (FGAM) and glutamate. The FGAM synthase complex is composed of three subunits. PurQ produces an ammonia molecule by converting glutamine to glutamate. PurL transfers the ammonia molecule to FGAR to form FGAM in an ATP-dependent manner. PurS interacts with PurQ and PurL and is thought to assist in the transfer of the ammonia molecule from PurQ to PurL. In Brucella canis (strain ATCC 23365 / NCTC 10854 / RM-666), this protein is Phosphoribosylformylglycinamidine synthase subunit PurL.